A 179-amino-acid chain; its full sequence is NAD(P)H-quinone oxidoreductase subunit I, chloroplastic (179 aa).

4Fe-4S ferredoxin-type domains lie at 55–84 (GRIHFEFDKCIACEVCVRVCPIDLPVVDWR) and 95–124 (LNYSIDFGVCIFCGNCVEYCPTNCLSMTEE). Residues Cys64, Cys67, Cys70, Cys74, Cys104, Cys107, Cys110, and Cys114 each coordinate [4Fe-4S] cluster.

Belongs to the complex I 23 kDa subunit family. As to quaternary structure, NDH is composed of at least 16 different subunits, 5 of which are encoded in the nucleus. It depends on [4Fe-4S] cluster as a cofactor.

The protein localises to the plastid. It is found in the chloroplast thylakoid membrane. The catalysed reaction is a plastoquinone + NADH + (n+1) H(+)(in) = a plastoquinol + NAD(+) + n H(+)(out). The enzyme catalyses a plastoquinone + NADPH + (n+1) H(+)(in) = a plastoquinol + NADP(+) + n H(+)(out). Functionally, NDH shuttles electrons from NAD(P)H:plastoquinone, via FMN and iron-sulfur (Fe-S) centers, to quinones in the photosynthetic chain and possibly in a chloroplast respiratory chain. The immediate electron acceptor for the enzyme in this species is believed to be plastoquinone. Couples the redox reaction to proton translocation, and thus conserves the redox energy in a proton gradient. This Acorus calamus (Sweet flag) protein is NAD(P)H-quinone oxidoreductase subunit I, chloroplastic.